A 249-amino-acid chain; its full sequence is Probable phosphatase Spea_1436 (249 aa).

Positions 8, 10, 16, 41, 74, 102, 132, 193, and 195 each coordinate Zn(2+).

It belongs to the PHP family. It depends on Zn(2+) as a cofactor.

The sequence is that of Probable phosphatase Spea_1436 from Shewanella pealeana (strain ATCC 700345 / ANG-SQ1).